A 259-amino-acid chain; its full sequence is Cytosolic Fe-S cluster assembly factor Nubp2 homolog (259 aa).

Residue Gly14–Ser21 coordinates ATP. Residues Cys188 and Cys191 each contribute to the [4Fe-4S] cluster site.

This sequence belongs to the Mrp/NBP35 ATP-binding proteins family. NUBP2/CFD1 subfamily. In terms of assembly, heterotetramer of 2 Nubp1 and 2 Nubp2 chains. It depends on [4Fe-4S] cluster as a cofactor.

It localises to the cytoplasm. Its function is as follows. Component of the cytosolic iron-sulfur (Fe/S) protein assembly (CIA) machinery. Required for maturation of extramitochondrial Fe-S proteins. The Nubp1-Nubp2 heterotetramer forms a Fe-S scaffold complex, mediating the de novo assembly of an Fe-S cluster and its transfer to target apoproteins. This is Cytosolic Fe-S cluster assembly factor Nubp2 homolog from Aedes aegypti (Yellowfever mosquito).